The sequence spans 276 residues: Large ribosomal subunit protein uL2 (276 aa).

Residues 223–276 are disordered; that stretch reads GVAMNPVDHPHGGGEGRGKGHHPTSPWGLPTKGYKTRRGKRPSDKFIVRRRNEV. Basic and acidic residues-rich tracts occupy residues 230 to 240 and 263 to 276; these read DHPHGGGEGRG and RPSD…RNEV.

The protein belongs to the universal ribosomal protein uL2 family. In terms of assembly, part of the 50S ribosomal subunit. Forms a bridge to the 30S subunit in the 70S ribosome.

Its function is as follows. One of the primary rRNA binding proteins. Required for association of the 30S and 50S subunits to form the 70S ribosome, for tRNA binding and peptide bond formation. It has been suggested to have peptidyltransferase activity; this is somewhat controversial. Makes several contacts with the 16S rRNA in the 70S ribosome. The sequence is that of Large ribosomal subunit protein uL2 from Thermotoga maritima (strain ATCC 43589 / DSM 3109 / JCM 10099 / NBRC 100826 / MSB8).